Reading from the N-terminus, the 337-residue chain is Putative long-chain-alcohol O-fatty-acyltransferase 10 (337 aa).

8 helical membrane-spanning segments follow: residues 7-27, 38-58, 59-79, 82-102, 142-162, 228-248, 254-274, and 285-305; these read SFVK…YIPS, SVLP…FTIF, SSTT…LFAF, GPLL…CLPI, ILLL…LLTI, MGCM…YFYI, TLEV…EIAV, and MLLR…LFFG.

This sequence belongs to the wax synthase family.

It localises to the membrane. It carries out the reaction a long chain fatty alcohol + a fatty acyl-CoA = a wax ester + CoA. In terms of biological role, catalyzes the final step in the synthesis of long-chain linear esters (waxes). The protein is Putative long-chain-alcohol O-fatty-acyltransferase 10 of Arabidopsis thaliana (Mouse-ear cress).